The chain runs to 89 residues: HssA/B-like protein 16 (89 aa).

This sequence belongs to the hssA/B family.

The polypeptide is HssA/B-like protein 16 (hssl16) (Dictyostelium discoideum (Social amoeba)).